The chain runs to 248 residues: ATP synthase subunit a, chloroplastic (248 aa).

5 helical membrane passes run 35-55, 94-114, 133-153, 202-222, and 224-244; these read GQVF…SFLG, VPYI…GALI, INTT…AGLS, VFTL…GLFA, and SIQA…AMEG.

This sequence belongs to the ATPase A chain family. In terms of assembly, F-type ATPases have 2 components, CF(1) - the catalytic core - and CF(0) - the membrane proton channel. CF(1) has five subunits: alpha(3), beta(3), gamma(1), delta(1), epsilon(1). CF(0) has four main subunits: a, b, b' and c.

It is found in the plastid. Its subcellular location is the chloroplast thylakoid membrane. Functionally, key component of the proton channel; it plays a direct role in the translocation of protons across the membrane. This Pyropia yezoensis (Susabi-nori) protein is ATP synthase subunit a, chloroplastic.